Reading from the N-terminus, the 184-residue chain is Gastrokine-1 (184 aa).

A signal peptide spans 1 to 20 (MKLTMFVVGLLGLLAAPGFA). One can recognise a BRICHOS domain in the interval 54 to 148 (NNGWDSWNSL…MCRGIPTYVA (95 aa)). An intrachain disulfide couples C81 to C140.

Belongs to the gastrokine family. As to expression, expressed in the stomach. Highly expressed specifically in surface cells of the antrum mucosa from where it is secreted.

The protein resides in the secreted. The protein localises to the cytoplasmic granule. It is found in the golgi apparatus. Its function is as follows. Has mitogenic activity and may be involved in maintaining the integrity of the gastric mucosal epithelium. The polypeptide is Gastrokine-1 (Gkn1) (Mus musculus (Mouse)).